The sequence spans 208 residues: uncharacterized protein (208 aa).

3 disordered regions span residues 91-115 (PGQA…PSQD), 127-156 (QSWS…KRPG), and 182-208 (NKLG…RKFK). A compositionally biased stretch (polar residues) spans 127-136 (QSWSSGTSRP).

This is an uncharacterized protein from Rattus norvegicus (Rat).